Here is a 506-residue protein sequence, read N- to C-terminus: Maturase K (506 aa).

It belongs to the intron maturase 2 family. MatK subfamily.

It is found in the plastid. It localises to the chloroplast. Usually encoded in the trnK tRNA gene intron. Probably assists in splicing its own and other chloroplast group II introns. The protein is Maturase K of Wisteria frutescens (American wisteria).